We begin with the raw amino-acid sequence, 311 residues long: tRNA dimethylallyltransferase (311 aa).

16–23 contributes to the ATP binding site; the sequence is GATASGKS. Position 18 to 23 (18 to 23) interacts with substrate; that stretch reads TASGKS. Interaction with substrate tRNA regions lie at residues 41–44 and 165–169; these read DSRQ and QRLIR.

Belongs to the IPP transferase family. Monomer. Mg(2+) is required as a cofactor.

The catalysed reaction is adenosine(37) in tRNA + dimethylallyl diphosphate = N(6)-dimethylallyladenosine(37) in tRNA + diphosphate. In terms of biological role, catalyzes the transfer of a dimethylallyl group onto the adenine at position 37 in tRNAs that read codons beginning with uridine, leading to the formation of N6-(dimethylallyl)adenosine (i(6)A). This is tRNA dimethylallyltransferase from Chlorobium chlorochromatii (strain CaD3).